Here is a 391-residue protein sequence, read N- to C-terminus: MELWTHPTPAAPRLATSTRTRWRRTSRCSQPWATTPGTNSSDASRTPTTASASATSKPQSASARARSVRRSPDCTPRAWSRGARKDRGATTNRPRRPKFCSKRSTTCEATMSNDNETMVADRDPEETREMVRERYAGIATSGQDCCGDVGLDVSGDGGCCSDETEASGSERLGYDADDVASVADGADLGLGCGNPKAFAAMAPGETVLDLGSGAGFDCFLAAQEVGPDGHVIGVDMTPEMISKARENVAKNDAENVEFRLGEIGHLPVADESVNVVISNCVVNLAPEKQRVFDDTYRVLRPGGRVAISDVVQTAPFPDDVQMDPDSLTGCVAGASTVDDLKAMLDEAGFEAVEIAPKDESTEFISDWDADRDLGEYLVSATIEARKPARDD.

Residues 1–126 (MELWTHPTPA…TMVADRDPEE (126 aa)) are disordered. Positions 28–39 (CSQPWATTPGTN) are enriched in polar residues. Over residues 40–65 (SSDASRTPTTASASATSKPQSASARA) the composition is skewed to low complexity. Over residues 102 to 116 (KRSTTCEATMSNDNE) the composition is skewed to polar residues.

It belongs to the methyltransferase superfamily. Arsenite methyltransferase family.

It carries out the reaction arsenic triglutathione + [thioredoxin]-dithiol + S-adenosyl-L-methionine + 2 H2O = methylarsonous acid + [thioredoxin]-disulfide + 3 glutathione + S-adenosyl-L-homocysteine + H(+). The enzyme catalyses arsenic triglutathione + 2 [thioredoxin]-dithiol + 2 S-adenosyl-L-methionine + H2O = dimethylarsinous acid + 2 [thioredoxin]-disulfide + 3 glutathione + 2 S-adenosyl-L-homocysteine + 2 H(+). It catalyses the reaction arsenic triglutathione + 3 [thioredoxin]-dithiol + 3 S-adenosyl-L-methionine = trimethylarsine + 3 [thioredoxin]-disulfide + 3 glutathione + 3 S-adenosyl-L-homocysteine + 3 H(+). Catalyzes the transfer of a methyl group from AdoMet to arsenite, producing methylated arsenicals. This is Arsenite methyltransferase from Halobacterium salinarum (strain ATCC 700922 / JCM 11081 / NRC-1) (Halobacterium halobium).